A 526-amino-acid chain; its full sequence is Microphthalmia-associated transcription factor (526 aa).

The tract at residues 20–54 (EPKTYYELKSQPLKSSSSAEHSGASKPPLSSSTMT) is disordered. Low complexity predominate over residues 34 to 44 (SSSSAEHSGAS). Phosphoserine; by MAPK is present on S180. Residue K289 forms a Glycyl lysine isopeptide (Lys-Gly) (interchain with G-Cter in SUMO) linkage. The region spanning 311–364 (QKKDNHNLIERRRRFNINDRIKELGTLIPKSNDPDMRWNKGTILKASVDYIRKL) is the bHLH domain. Residues 355 to 401 (KASVDYIRKLQREQQRAKDLENRQKKLEHANRHLLLRVQELEMQARA) adopt a coiled-coil conformation. A leucine-zipper region spans residues 374–395 (LENRQKKLEHANRHLLLRVQEL). Residue S405 is modified to Phosphoserine; by GSK3. Residue S414 is modified to Phosphoserine. K423 is covalently cross-linked (Glycyl lysine isopeptide (Lys-Gly) (interchain with G-Cter in SUMO)). Residue S491 is modified to Phosphoserine. The interval 496 to 526 (TDPLLSSVSPGASKTSSRRSSMSAEETEHAC) is disordered. Low complexity predominate over residues 507–519 (ASKTSSRRSSMSA). Residue S516 is modified to Phosphoserine; by RPS6KA1.

Belongs to the MiT/TFE family. As to quaternary structure, homodimer or heterodimer; dimerization is mediated via the coiled coil region. Efficient DNA binding requires dimerization with another bHLH protein. Binds DNA in the form of homodimer or heterodimer with either TFE3, TFEB or TFEC. Identified in a complex with HINT1 and CTNNB1. Interacts with KARS1. Interacts with VSX2. Post-translationally, phosphorylation at Ser-405 significantly enhances the ability to bind the tyrosinase promoter. Phosphorylated at Ser-180 and Ser-516 following KIT signaling, triggering a short live activation: Phosphorylation at Ser-180 and Ser-516 by MAPK and RPS6KA1, respectively, activate the transcription factor activity but also promote ubiquitination and subsequent degradation by the proteasome. Phosphorylated in response to blue light (415nm). Ubiquitinated following phosphorylation at Ser-180, leading to subsequent degradation by the proteasome. Deubiquitinated by USP13, preventing its degradation.

The protein resides in the nucleus. It localises to the cytoplasm. In terms of biological role, transcription factor that regulates the expression of genes with essential roles in cell differentiation, proliferation and survival. Binds to M-boxes (5'-TCATGTG-3') and symmetrical DNA sequences (E-boxes) (5'-CACGTG-3') found in the promoters of target genes, such as BCL2 and tyrosinase (TYR). Plays an important role in melanocyte development by regulating the expression of tyrosinase (TYR) and tyrosinase-related protein 1 (TYRP1). Plays a critical role in the differentiation of various cell types, such as neural crest-derived melanocytes, mast cells, osteoclasts and optic cup-derived retinal pigment epithelium. This chain is Microphthalmia-associated transcription factor (Mitf), found in Rattus norvegicus (Rat).